The primary structure comprises 410 residues: Argininosuccinate synthase (410 aa).

ATP contacts are provided by residues 10 to 18 and A37; that span reads AYSGGLDTS. L-citrulline-binding residues include Y90 and S95. ATP is bound at residue G120. Residues T122, N126, and D127 each contribute to the L-aspartate site. N126 lines the L-citrulline pocket. The L-citrulline site is built by R130, S182, S191, E267, and Y279.

This sequence belongs to the argininosuccinate synthase family. Type 1 subfamily. As to quaternary structure, homotetramer.

The protein localises to the cytoplasm. The enzyme catalyses L-citrulline + L-aspartate + ATP = 2-(N(omega)-L-arginino)succinate + AMP + diphosphate + H(+). It functions in the pathway amino-acid biosynthesis; L-arginine biosynthesis; L-arginine from L-ornithine and carbamoyl phosphate: step 2/3. This Polynucleobacter necessarius subsp. necessarius (strain STIR1) protein is Argininosuccinate synthase.